Reading from the N-terminus, the 457-residue chain is Dolichol phosphate-mannose mannosyltransferase (457 aa).

Residues 1 to 12 (MKRLAKAAFSQN) are Cytoplasmic-facing. A helical transmembrane segment spans residues 13–33 (SLTAPIVSTFVYLISVVRVVL). Topologically, residues 34 to 91 (NGNWPVTSSDTAMFQHIGWMVFSGKRYYIDAWDPKPPLTLELATIIAYISNGDPHLQH) are extracellular. The chain crosses the membrane as a helical span at residues 92-112 (TLSVVSTIVAGILLTYLISHI). Residues 113-120 (TSEITGNQ) lie on the Cytoplasmic side of the membrane. Residues 121–141 (FAGLLSGIVFITFPVIHYSAV) form a helical membrane-spanning segment. At 142 to 173 (FGYEPKYFVFLFGLGSIYLSRNPKPILSGAAA) the chain is on the extracellular side. Residues 174–194 (AASAGMWQFAIIFPIISFGII) traverse the membrane as a helical segment. Topologically, residues 195–211 (SRRKSKDLILKYVFGAT) are cytoplasmic. Residues 212–232 (IIAFISLLPIYLQGGLVAMTV) form a helical membrane-spanning segment. Residues 233-259 (EVIIAPLYAGETQSFLYRLVKGVTHLK) are Extracellular-facing. The helical transmembrane segment at 260–280 (LMIPIALLGMAGILLGFLDDI) threads the bilayer. Residues 281–283 (RER) are Cytoplasmic-facing. The helical transmembrane segment at 284-304 (WWVVGLLLWFCIQIFILDYDG) threads the bilayer. Over 305–307 (ADD) the chain is Extracellular. The helical transmembrane segment at 308–328 (LFLGIILVSMGIGFAFEKLST) threads the bilayer. The Cytoplasmic segment spans residues 329–337 (KYESERINS). The helical transmembrane segment at 338-358 (IVTAVVVCMLIWQVVTLGGVG) threads the bilayer. Residues 359–457 (VITNPYSYSG…EEKCGKWRLP (99 aa)) are Extracellular-facing.

It is found in the cell membrane. The protein operates within cell surface structure biogenesis; S-layer biogenesis. It functions in the pathway protein modification; protein glycosylation. Involved in the assembly of a N-linked pentasaccharide that decorates the S-layer glycoprotein and flagellins. Transfers mannose, the terminal pentasaccharide residue, from its dedicated dolichol phosphate carrier to the protein-bound glycan comprising the first four subunits of the N-linked pentasaccharide. In Haloferax volcanii (strain ATCC 29605 / DSM 3757 / JCM 8879 / NBRC 14742 / NCIMB 2012 / VKM B-1768 / DS2) (Halobacterium volcanii), this protein is Dolichol phosphate-mannose mannosyltransferase (aglS).